We begin with the raw amino-acid sequence, 206 residues long: MENKTEVVVAENANNQTQPERKKFDRKPNRRPQGPKQFQKDDFEEKVVTIRRVTKVTKGGRHFRFAAVVVVGDKKGQVGLGTGKANEVPEAIKKAVKEAKKNLIRVPLRGTTVPHEVIGHFGAGQVLIKPAKPGTGVIAGGPARAVIELAGIADVYAKSLGRNNPINMIRATIDGLSSMHTAKKVNDLRFGKPVIKTEKPKVEETK.

The disordered stretch occupies residues 1–42; it reads MENKTEVVVAENANNQTQPERKKFDRKPNRRPQGPKQFQKDD. Positions 43–106 constitute an S5 DRBM domain; that stretch reads FEEKVVTIRR…KEAKKNLIRV (64 aa).

This sequence belongs to the universal ribosomal protein uS5 family. Part of the 30S ribosomal subunit. Contacts proteins S4 and S8.

Functionally, with S4 and S12 plays an important role in translational accuracy. In terms of biological role, located at the back of the 30S subunit body where it stabilizes the conformation of the head with respect to the body. The sequence is that of Small ribosomal subunit protein uS5 from Mesoplasma florum (strain ATCC 33453 / NBRC 100688 / NCTC 11704 / L1) (Acholeplasma florum).